The sequence spans 103 residues: MIITTTGIIEGKPIRQYFGLVNGEAIMGANVVRDIFASITDIVGGRSGAYESKLAHAREIALEEMTEQARRMGANAIVGVDLDYEVIREGMLMVSASGTAVQI.

Belongs to the UPF0145 family.

This chain is UPF0145 protein Dred_2155, found in Desulforamulus reducens (strain ATCC BAA-1160 / DSM 100696 / MI-1) (Desulfotomaculum reducens).